The primary structure comprises 591 residues: Aspartate--tRNA ligase (591 aa).

E176 contributes to the L-aspartate binding site. The interval 200–203 (QILK) is aspartate. L-aspartate is bound at residue R222. Residues 222-224 (RDE) and Q231 contribute to the ATP site. Residue H450 coordinates L-aspartate. E484 provides a ligand contact to ATP. R491 provides a ligand contact to L-aspartate. An ATP-binding site is contributed by 536–539 (GLDR).

Belongs to the class-II aminoacyl-tRNA synthetase family. Type 1 subfamily. As to quaternary structure, homodimer.

It is found in the cytoplasm. The catalysed reaction is tRNA(Asp) + L-aspartate + ATP = L-aspartyl-tRNA(Asp) + AMP + diphosphate. Functionally, catalyzes the attachment of L-aspartate to tRNA(Asp) in a two-step reaction: L-aspartate is first activated by ATP to form Asp-AMP and then transferred to the acceptor end of tRNA(Asp). The sequence is that of Aspartate--tRNA ligase from Listeria monocytogenes serotype 4b (strain F2365).